The chain runs to 144 residues: Prefoldin subunit alpha (144 aa).

Belongs to the prefoldin subunit alpha family. As to quaternary structure, heterohexamer of two alpha and four beta subunits.

Its subcellular location is the cytoplasm. In terms of biological role, molecular chaperone capable of stabilizing a range of proteins. Seems to fulfill an ATP-independent, HSP70-like function in archaeal de novo protein folding. The polypeptide is Prefoldin subunit alpha (Methanosarcina barkeri (strain Fusaro / DSM 804)).